A 649-amino-acid chain; its full sequence is L-ornithine N(5)-monooxygenase (649 aa).

FAD-binding positions include 72–80 and Q91; that span reads EKRGHFAWH. Substrate is bound at residue K96. V157 provides a ligand contact to FAD. NADP(+)-binding positions include 289 to 292 and R314; that span reads AGQS. Substrate is bound by residues 328–331 and N359; that span reads NSAA. Position 359 to 361 (359 to 361) interacts with NADP(+); that stretch reads NYS. The interval 512–547 is disordered; sequence AMQSDAVRSGKSSPGSGSDASSTSSQQTLASENSTE. The span at 520 to 536 shows a compositional bias: low complexity; the sequence is SGKSSPGSGSDASSTSS. Positions 537–547 are enriched in polar residues; that stretch reads QQTLASENSTE. Position 569–571 (569–571) interacts with FAD; that stretch reads SLL. Position 572 (S572) interacts with substrate. Positions 585-611 are disordered; it reads LLQRLPRTRRGTASSAATQPAASTVAS. The segment covering 596–611 has biased composition (low complexity); it reads TASSAATQPAASTVAS.

Belongs to the lysine N(6)-hydroxylase/L-ornithine N(5)-oxygenase family. In terms of assembly, homotetramer. FAD serves as cofactor.

It catalyses the reaction L-ornithine + NADPH + O2 = N(5)-hydroxy-L-ornithine + NADP(+) + H2O. The catalysed reaction is L-ornithine + NADH + O2 = N(5)-hydroxy-L-ornithine + NAD(+) + H2O. The protein operates within siderophore biosynthesis; ferrichrome biosynthesis. Its function is as follows. Catalyzes the conversion of L-ornithine to N(5)-hydroxyornithine, the first step in the biosynthesis of all hydroxamate-containing siderophores, such as ferrichrome. This Mycosarcoma maydis (Corn smut fungus) protein is L-ornithine N(5)-monooxygenase (SID1).